We begin with the raw amino-acid sequence, 1286 residues long: Galactose/N-acetyl-D-galactosamine lectin heavy subunit 2 (1286 aa).

Residues 1–15 (MKLLLLNILLLCCLA) form the signal peptide. The Extracellular portion of the chain corresponds to 16-1227 (DKLNEFSADI…NNVGAIAAAT (1212 aa)). Residues N200, N331, N384, N462, N652, N883, N1197, and N1207 are each glycosylated (N-linked (GlcNAc...) asparagine). A helical transmembrane segment spans residues 1228–1248 (TVAVVVVAVVVALIVVSIGLF). Topologically, residues 1249-1286 (KTYQLVSSAMKNAITTTNENAEYVGADNEATNAATYNG) are cytoplasmic.

In terms of assembly, heterodimer composed of a 170 kDa heavy subunit (hgl) and a 31/35 kDa light subunit (lgl); disulfide-linked. In terms of processing, N-glycosylated.

It localises to the cell membrane. In terms of biological role, lectin which binds galactose and N-acetyl-D-galactosamine of host glycoproteins and thus mediates adhesion to host cells. Mediates adherence to host colonic mucins, an essential step for pathogenic tissue invasion. The polypeptide is Galactose/N-acetyl-D-galactosamine lectin heavy subunit 2 (Entamoeba histolytica (strain ATCC 30459 / HM-1:IMSS / ABRM)).